A 553-amino-acid chain; its full sequence is CDP-diacylglycerol--glycerol-3-phosphate 3-phosphatidyltransferase, mitochondrial (553 aa).

The N-terminal 25 residues, 1–25, are a transit peptide targeting the mitochondrion; the sequence is MAAPAAGPVFWRRLLGLLPGRPGLA. S46 bears the Phosphoserine mark. 121-128 is a binding site for ATP; sequence ASLYLGTG. PLD phosphodiesterase domains follow at residues 212–238 and 457–490; these read TIGL…SDSY and RGWT…GYRS. Active-site residues include H217, K219, and D224.

It belongs to the CDP-alcohol phosphatidyltransferase class-II family. As to expression, widely expressed with higher expression in testis, liver and brain.

It localises to the mitochondrion. It carries out the reaction a CDP-1,2-diacyl-sn-glycerol + sn-glycerol 3-phosphate = a 1,2-diacyl-sn-glycero-3-phospho-(1'-sn-glycero-3'-phosphate) + CMP + H(+). It participates in phospholipid metabolism; phosphatidylglycerol biosynthesis; phosphatidylglycerol from CDP-diacylglycerol: step 1/2. Activated by calcium and magnesium and inhibited by other bivalent cations. Its function is as follows. Functions in the biosynthesis of the anionic phospholipids phosphatidylglycerol and cardiolipin. This chain is CDP-diacylglycerol--glycerol-3-phosphate 3-phosphatidyltransferase, mitochondrial (Pgs1), found in Mus musculus (Mouse).